The primary structure comprises 328 residues: 2,4-dinitroanisole O-demethylase subunit alpha (328 aa).

A propeptide spanning residues 1 to 9 is cleaved from the precursor; it reads MSVTSQTSS. Zn(2+) contacts are provided by H101, H103, D105, H168, H225, and C247.

It belongs to the metallo-beta-lactamase superfamily. In terms of assembly, part of the complex DnhAB composed of the 2,4-dinitroanisole O-demethylase alpha (DnhA) and beta (DnhB) subunits. It depends on Zn(2+) as a cofactor.

It carries out the reaction 2,4-dinitroanisole + H2O = 2,4-dinitrophenol + methanol + H(+). Functionally, involved in the degradation of 2,4-dinitroanisole (DNAN), an insensitive munition ingredient used in explosive formulations as a replacement for 2,4,6-trinitrotoluene (TNT). Catalyzes the removal of the methyl group from 2,4-dinitroanisole (DNAN) to yield 2,4-dinitrophenol (2,4-DNP) and methanol. This Nocardioides sp. (strain JS1661) protein is 2,4-dinitroanisole O-demethylase subunit alpha.